A 301-amino-acid chain; its full sequence is Golgi to ER traffic protein 2 (301 aa).

Topologically, residues 1–167 are cytoplasmic; the sequence is MSEPVVDTAE…LEYNTYNQKL (167 aa). Over residues 42-55 the composition is skewed to low complexity; it reads SQGSSVKTSGVKSV. The tract at residues 42-93 is disordered; it reads SQGSSVKTSGVKSVLDQEKEATSSHDDDPEIQDITEITTPPPRTPPIGEDAP. Residues 56–67 show a composition bias toward basic and acidic residues; the sequence is LDQEKEATSSHD. A helical membrane pass occupies residues 168–188; it reads WKFRFLLVRVLVTLFNFFYHY. Residues 189-214 are Lumenal-facing; sequence TSISDFHASNYAYVRDLSSEEYPVRD. A helical membrane pass occupies residues 215–234; sequence FFTWFATSEVVLVAAYYSVF. Residues 235-278 are Cytoplasmic-facing; that stretch reads HSLGLFHAANQNSIILKVMSMGSMILPQLESYKPLVARFLGYYE. Residues 279–299 form a helical membrane-spanning segment; sequence LLGIVLGGLSLVIVLFGLLSF. At 300 to 301 the chain is on the lumenal side; the sequence is AN.

Belongs to the GET2 family. In terms of assembly, component of the Golgi to ER traffic (GET) complex, which is composed of GET1, GET2 and GET3. Within the complex, GET1 and GET2 form a heterotetramer which is stabilized by phosphatidylinositol binding and which binds to the GET3 homodimer.

The protein localises to the endoplasmic reticulum membrane. The protein resides in the golgi apparatus membrane. Its function is as follows. Required for the post-translational delivery of tail-anchored (TA) proteins to the endoplasmic reticulum. Together with GET1, acts as a membrane receptor for soluble GET3, which recognizes and selectively binds the transmembrane domain of TA proteins in the cytosol. The GET complex cooperates with the HDEL receptor ERD2 to mediate the ATP-dependent retrieval of resident ER proteins that contain a C-terminal H-D-E-L retention signal from the Golgi to the ER. This chain is Golgi to ER traffic protein 2, found in Candida dubliniensis (strain CD36 / ATCC MYA-646 / CBS 7987 / NCPF 3949 / NRRL Y-17841) (Yeast).